The chain runs to 316 residues: uncharacterized protein (316 aa).

It belongs to the chlamydial CPn_0441/CT_007/TC_0275 family.

This is an uncharacterized protein from Chlamydia trachomatis serovar D (strain ATCC VR-885 / DSM 19411 / UW-3/Cx).